A 222-amino-acid polypeptide reads, in one-letter code: UPF0758 protein YPN_3801 (222 aa).

An MPN domain is found at 100–222 (VLLNPGITQK…CVSFAERGWL (123 aa)). H171, H173, and D184 together coordinate Zn(2+). Positions 171 to 184 (HNHPSGKAEPSQAD) match the JAMM motif motif.

It belongs to the UPF0758 family. YicR subfamily.

This is UPF0758 protein YPN_3801 from Yersinia pestis bv. Antiqua (strain Nepal516).